We begin with the raw amino-acid sequence, 264 residues long: Thymidylate synthase (264 aa).

Position 21 (arginine 21) interacts with dUMP. Residue histidine 51 coordinates (6R)-5,10-methylene-5,6,7,8-tetrahydrofolate. 126 to 127 (RR) contacts dUMP. The Nucleophile role is filled by cysteine 146. DUMP contacts are provided by residues 166 to 169 (RSVD), asparagine 177, and 207 to 209 (HLY). Aspartate 169 contributes to the (6R)-5,10-methylene-5,6,7,8-tetrahydrofolate binding site. Residue alanine 263 participates in (6R)-5,10-methylene-5,6,7,8-tetrahydrofolate binding.

It belongs to the thymidylate synthase family. Bacterial-type ThyA subfamily. In terms of assembly, homodimer.

Its subcellular location is the cytoplasm. It catalyses the reaction dUMP + (6R)-5,10-methylene-5,6,7,8-tetrahydrofolate = 7,8-dihydrofolate + dTMP. It functions in the pathway pyrimidine metabolism; dTTP biosynthesis. Functionally, catalyzes the reductive methylation of 2'-deoxyuridine-5'-monophosphate (dUMP) to 2'-deoxythymidine-5'-monophosphate (dTMP) while utilizing 5,10-methylenetetrahydrofolate (mTHF) as the methyl donor and reductant in the reaction, yielding dihydrofolate (DHF) as a by-product. This enzymatic reaction provides an intracellular de novo source of dTMP, an essential precursor for DNA biosynthesis. The sequence is that of Thymidylate synthase from Geobacillus sp. (strain WCH70).